The primary structure comprises 134 residues: Small ribosomal subunit protein uS8c (134 aa).

Component of the chloroplast small ribosomal subunit (SSU). Mature 70S chloroplast ribosomes of higher plants consist of a small (30S) and a large (50S) subunit. The 30S small subunit contains 1 molecule of ribosomal RNA (16S rRNA) and 24 different proteins. The 50S large subunit contains 3 rRNA molecules (23S, 5S and 4.5S rRNA) and 33 different proteins.

The protein resides in the plastid. The protein localises to the chloroplast. Its function is as follows. Component of the chloroplast ribosome (chloro-ribosome), a dedicated translation machinery responsible for the synthesis of chloroplast genome-encoded proteins, including proteins of the transcription and translation machinery and components of the photosynthetic apparatus. This chain is Small ribosomal subunit protein uS8c (rps8), found in Spinacia oleracea (Spinach).